Consider the following 91-residue polypeptide: uncharacterized protein (91 aa).

Positions methionine 1–alanine 20 are cleaved as a signal peptide.

Belongs to the BhsA/McbA family.

Its subcellular location is the periplasm. This is an uncharacterized protein from Escherichia coli O157:H7.